The sequence spans 829 residues: Probable beta-glucosidase H (829 aa).

N-linked (GlcNAc...) asparagine glycosylation occurs at Asn-13. Asp-225 is a catalytic residue. 5 N-linked (GlcNAc...) asparagine glycosylation sites follow: Asn-304, Asn-473, Asn-602, Asn-627, and Asn-664. The 160-residue stretch at 389-548 folds into the PA14 domain; the sequence is RMLSNAVIHF…DPEQMVANAV (160 aa).

This sequence belongs to the glycosyl hydrolase 3 family.

The protein resides in the secreted. It carries out the reaction Hydrolysis of terminal, non-reducing beta-D-glucosyl residues with release of beta-D-glucose.. Its pathway is glycan metabolism; cellulose degradation. Functionally, beta-glucosidases are one of a number of cellulolytic enzymes involved in the degradation of cellulosic biomass. Catalyzes the last step releasing glucose from the inhibitory cellobiose. This is Probable beta-glucosidase H (bglH) from Aspergillus fumigatus (strain ATCC MYA-4609 / CBS 101355 / FGSC A1100 / Af293) (Neosartorya fumigata).